The sequence spans 132 residues: Small ribosomal subunit protein uS8c (132 aa).

The protein belongs to the universal ribosomal protein uS8 family. As to quaternary structure, part of the 30S ribosomal subunit.

It localises to the plastid. The protein resides in the chloroplast. Its function is as follows. One of the primary rRNA binding proteins, it binds directly to 16S rRNA central domain where it helps coordinate assembly of the platform of the 30S subunit. This is Small ribosomal subunit protein uS8c (rps8) from Anthoceros angustus (Hornwort).